The sequence spans 319 residues: Lipopolysaccharide heptosyltransferase 1 (319 aa).

ADP-L-glycero-beta-D-manno-heptose-binding residues include threonine 187, threonine 188, lysine 192, glutamate 222, methionine 242, aspartate 261, threonine 262, glycine 263, and histidine 266.

This sequence belongs to the glycosyltransferase 9 family.

Its subcellular location is the cell inner membrane. The enzyme catalyses an alpha-Kdo-(2-&gt;4)-alpha-Kdo-(2-&gt;6)-lipid A + ADP-L-glycero-beta-D-manno-heptose = an L-alpha-D-Hep-(1-&gt;5)-[alpha-Kdo-(2-&gt;4)]-alpha-Kdo-(2-&gt;6)-lipid A + ADP + H(+). It catalyses the reaction alpha-Kdo-(2-&gt;4)-alpha-Kdo-(2-&gt;6)-lipid A (E. coli) + ADP-L-glycero-beta-D-manno-heptose = L-alpha-D-Hep-(1-&gt;5)-[alpha-Kdo-(2-&gt;4)]-alpha-Kdo-(2-&gt;6)-lipid A (E. coli) + ADP + H(+). The protein operates within bacterial outer membrane biogenesis; LPS core biosynthesis. Glycosyltransferase involved in the biosynthesis of the core oligosaccharide region of lipopolysaccharide (LPS). Catalyzes the addition of the first heptose unit to one 3-deoxy-D-manno-octulosonic acid (Kdo) residue of the Kdo2-lipid A module. The analog ADP-mannose can serve as an alternative donor in place of ADP-L-glycero-D-manno-heptose for the glycosylation of Kdo2-lipid A. Displays no activity with ADP-glucose, GDP-mannose, UDP-glucose or UDP-galactose. The sequence is that of Lipopolysaccharide heptosyltransferase 1 from Escherichia coli (strain K12).